The primary structure comprises 297 residues: Probable ABC transporter phosphite binding protein PhnD1 (297 aa).

Positions 1 to 24 are cleaved as a signal peptide; that stretch reads MFNLKYFLVSSSLLFSVFSSPVFS.

Belongs to the phosphate/phosphite/phosphonate binding protein family. The complex may be composed of two ATP-binding proteins (PhnC1), two transmembrane proteins (PhnE1) and a solute-binding protein (PhnD1).

It localises to the periplasm. Functionally, probably part of the ABC transporter complex PhnD1C1E1. Binds strongly to inorganic phosphite and with very weak affinities to methylphosphonate (MPn) and phosphate. In Prochlorococcus marinus (strain MIT 9301), this protein is Probable ABC transporter phosphite binding protein PhnD1.